Consider the following 242-residue polypeptide: Methylthioribulose-1-phosphate dehydratase (242 aa).

Residues 1–22 (MAAASGHGLELANGGDATQDKL) form a disordered region. A substrate-binding site is contributed by Cys-97. Zn(2+) is bound by residues His-115 and His-117. Residue Glu-139 is the Proton donor/acceptor of the active site. His-195 contributes to the Zn(2+) binding site.

Belongs to the aldolase class II family. MtnB subfamily. Zn(2+) is required as a cofactor.

The protein resides in the cytoplasm. The catalysed reaction is 5-(methylsulfanyl)-D-ribulose 1-phosphate = 5-methylsulfanyl-2,3-dioxopentyl phosphate + H2O. It participates in amino-acid biosynthesis; L-methionine biosynthesis via salvage pathway; L-methionine from S-methyl-5-thio-alpha-D-ribose 1-phosphate: step 2/6. Its function is as follows. Catalyzes the dehydration of methylthioribulose-1-phosphate (MTRu-1-P) into 2,3-diketo-5-methylthiopentyl-1-phosphate (DK-MTP-1-P). Functions in the methionine salvage pathway. May play a role in apoptosis. The sequence is that of Methylthioribulose-1-phosphate dehydratase from Gallus gallus (Chicken).